A 153-amino-acid chain; its full sequence is Large ribosomal subunit protein uL30 (153 aa).

This sequence belongs to the universal ribosomal protein uL30 family. Part of the 50S ribosomal subunit.

This Metallosphaera sedula (strain ATCC 51363 / DSM 5348 / JCM 9185 / NBRC 15509 / TH2) protein is Large ribosomal subunit protein uL30.